A 231-amino-acid polypeptide reads, in one-letter code: Potassium/proton antiporter CemA (231 aa).

Helical transmembrane passes span Phe7 to Phe27, Ile104 to Ser124, Ile154 to Ile174, and Ile189 to Ile209.

This sequence belongs to the CemA family.

The protein localises to the plastid. It localises to the chloroplast inner membrane. The enzyme catalyses K(+)(in) + H(+)(out) = K(+)(out) + H(+)(in). In terms of biological role, contributes to K(+)/H(+) antiport activity by supporting proton efflux to control proton extrusion and homeostasis in chloroplasts in a light-dependent manner to modulate photosynthesis. Prevents excessive induction of non-photochemical quenching (NPQ) under continuous-light conditions. Indirectly promotes efficient inorganic carbon uptake into chloroplasts. The polypeptide is Potassium/proton antiporter CemA (Pisum sativum (Garden pea)).